The sequence spans 256 residues: Small ribosomal subunit protein eS1 (256 aa).

A2 is modified (N-acetylalanine; partial).

Belongs to the eukaryotic ribosomal protein eS1 family. As to quaternary structure, component of the small ribosomal subunit. Mature ribosomes consist of a small (40S) and a large (60S) subunit. The 40S subunit contains about 33 different proteins and 1 molecule of RNA (18S). The 60S subunit contains about 49 different proteins and 3 molecules of RNA (25S, 5.8S and 5S).

The protein resides in the cytoplasm. In Sclerotinia sclerotiorum (strain ATCC 18683 / 1980 / Ss-1) (White mold), this protein is Small ribosomal subunit protein eS1 (rps1).